We begin with the raw amino-acid sequence, 113 residues long: Small ribosomal subunit protein bS6 (113 aa).

The protein belongs to the bacterial ribosomal protein bS6 family.

Its function is as follows. Binds together with bS18 to 16S ribosomal RNA. This is Small ribosomal subunit protein bS6 from Pseudoalteromonas translucida (strain TAC 125).